The primary structure comprises 403 residues: D-mannonate dehydratase CC0532 (403 aa).

Substrate-binding residues include asparagine 38 and histidine 123. The active-site Proton donor/acceptor is tyrosine 160. Position 211 (aspartate 211) interacts with Mg(2+). Catalysis depends on histidine 213, which acts as the Proton donor/acceptor. Residues glutamate 237 and glutamate 263 each contribute to the Mg(2+) site. Residues glutamate 263, arginine 284, histidine 313, aspartate 317, and glutamate 340 each coordinate substrate.

Belongs to the mandelate racemase/muconate lactonizing enzyme family. GalD subfamily. Mg(2+) is required as a cofactor.

It carries out the reaction D-mannonate = 2-dehydro-3-deoxy-D-gluconate + H2O. The protein operates within carbohydrate metabolism; pentose and glucuronate interconversion. Functionally, catalyzes the dehydration of D-mannonate. Has no detectable activity with a panel of 70 other acid sugars (in vitro). This Caulobacter vibrioides (strain ATCC 19089 / CIP 103742 / CB 15) (Caulobacter crescentus) protein is D-mannonate dehydratase CC0532.